A 91-amino-acid polypeptide reads, in one-letter code: Acylphosphatase (91 aa).

The Acylphosphatase-like domain occupies 3–91; sequence TVTMRVTGLV…EKFTRFSVVY (89 aa). Catalysis depends on residues R18 and N36.

Belongs to the acylphosphatase family.

The catalysed reaction is an acyl phosphate + H2O = a carboxylate + phosphate + H(+). This is Acylphosphatase (acyP) from Lactobacillus johnsonii (strain CNCM I-12250 / La1 / NCC 533).